A 951-amino-acid chain; its full sequence is MSSSYGNNGDKNNHEKFGFNLLRKKPQQPSNRSERRADDSSSSEDEAGPSSNYVSSSQLNLPSFRPSGGSTDELNRANRTNVGSSDARYSPRTASNTESGNRRQQMIEDDAIATIRDNSGAARCFDDDDEEEEEHQEQKDSGENPADISPRTSGVTKKLQFKSHPSIIPEDTATQDGGEYYEEKDAEKEDQDDSVSTQSSESKMDHFRHLFRRRSTARPHQETNDGRNSAESHSKGGMRNLNGADDEVEDGGFLSKFLSLTGGGLTPAVNNTDPSGENDHERNAGQNNLEDPIPMSDIAATAQQIVQAHSMMAGKSAPGTQHGASGSASSEHPNGEHNLGTEAGVTSPFEPVSPFNQSTDGETMVSSHQDDAFYVPATNHYDDIDDPDDLEPLGIEGSYIAPVDRVRGGVLGSLLKLYQNQDDQYTKSQLSLNDSSIEQTPEPVDQAGKSDQKTGKKIYNPFHKHSKSQTNVSGANKSGSSMNLPNFKATRPKAAAKNLVKAKNFKKKAAAEARITVHIADLLQRQRFILRLCKALMLYGAPTHRLEEYMVMTSRVLEIDGQFLYVPGCMIISFGDMTTRTSEVQLVRCNQGLNLWKLHGVHSVYKQVVHDIMSVEDANMEIDRILTGKNLYPPWVSVLLYAFCSSMVTPFAFGGDWINMAVAFGIGLCVGSLQFIVSQKSNLYSNVFEVTASIVVSFCGRALGSIPNSNICFGATVQGSLALILPGYIILCGSLELQSRNLVAGAVRMFYAIIYSLFLGFGITLGAALFGWIYHDATNETSCSKNISPWFRFIFVPCFSIGLGLINQARWTQLPVMTLISCCGYVVTYFSGKHFANSTEFTSAMAAFVIGILGNLYSRIWKGFAVSAMLPAIFVQVPSGVASQSSLLAGVQSANAIVNNSTTTVVQDDLSGSMSFGVTMIQVSIGISVGLFASTLFIYPFGKKRTGLFTL.

Composition is skewed to polar residues over residues 1–10 (MSSSYGNNGD), 68–84 (GGST…NVGS), and 92–104 (RTAS…NRRQ). Disordered stretches follow at residues 1-293 (MSSS…EDPI), 313-366 (AGKS…TMVS), and 433-487 (NDSS…LPNF). Acidic residues predominate over residues 126–135 (DDDDEEEEEH). Basic and acidic residues predominate over residues 219-234 (PHQETNDGRNSAESHS). Composition is skewed to polar residues over residues 318-332 (PGTQ…SSEH), 354-366 (PFNQ…TMVS), and 468-484 (SQTN…SMNL). 10 consecutive transmembrane segments (helical) span residues 635-655 (WVSV…AFGG), 657-677 (WINM…QFIV), 687-707 (VFEV…GSIP), 711-731 (ICFG…YIIL), 753-773 (IIYS…FGWI), 786-806 (NISP…LGLI), 811-831 (WTQL…TYFS), 841-861 (FTSA…SRIW), 863-883 (GFAV…GVAS), and 918-938 (VTMI…TLFI).

The protein belongs to the ThrE exporter (TC 2.A.79) family.

The protein localises to the membrane. The polypeptide is Pheromone-regulated membrane protein 10 (Kluyveromyces lactis (strain ATCC 8585 / CBS 2359 / DSM 70799 / NBRC 1267 / NRRL Y-1140 / WM37) (Yeast)).